The chain runs to 182 residues: UPF0397 protein BCG9842_B2659 (182 aa).

5 helical membrane-spanning segments follow: residues 9 to 29 (VVAI…GFSI), 40 to 60 (AILT…IGLI), 71 to 91 (WGIW…MGLI), 114 to 134 (ITGL…DIIV), and 142 to 162 (IVIQ…VLGL).

It belongs to the UPF0397 family.

It localises to the cell membrane. This chain is UPF0397 protein BCG9842_B2659, found in Bacillus cereus (strain G9842).